A 278-amino-acid polypeptide reads, in one-letter code: Large ribosomal subunit protein uL2 (278 aa).

Residues 201–278 (HGNINDGKAG…IMRSRHQRKK (78 aa)) are disordered. Residues 210–221 (GRSRWRGKRPHV) are compositionally biased toward basic residues.

This sequence belongs to the universal ribosomal protein uL2 family. In terms of assembly, part of the 50S ribosomal subunit. Forms a bridge to the 30S subunit in the 70S ribosome.

Functionally, one of the primary rRNA binding proteins. Required for association of the 30S and 50S subunits to form the 70S ribosome, for tRNA binding and peptide bond formation. It has been suggested to have peptidyltransferase activity; this is somewhat controversial. Makes several contacts with the 16S rRNA in the 70S ribosome. This chain is Large ribosomal subunit protein uL2, found in Rhizobium meliloti (strain 1021) (Ensifer meliloti).